A 209-amino-acid chain; its full sequence is Small ribosomal subunit protein uS3 (209 aa).

A KH type-2 domain is found at 38 to 107 (IRKFIKNKYY…RVVINIEEIK (70 aa)).

The protein belongs to the universal ribosomal protein uS3 family. As to quaternary structure, part of the 30S ribosomal subunit. Forms a tight complex with proteins S10 and S14.

Its function is as follows. Binds the lower part of the 30S subunit head. Binds mRNA in the 70S ribosome, positioning it for translation. The polypeptide is Small ribosomal subunit protein uS3 (Thermotoga sp. (strain RQ2)).